We begin with the raw amino-acid sequence, 101 residues long: Small ribosomal subunit protein bS18c (101 aa).

It belongs to the bacterial ribosomal protein bS18 family. Part of the 30S ribosomal subunit.

It is found in the plastid. Its subcellular location is the chloroplast. The sequence is that of Small ribosomal subunit protein bS18c from Citrus sinensis (Sweet orange).